A 403-amino-acid chain; its full sequence is uncharacterized protein (403 aa).

Residues 3 to 126 (QVKIGQFKFG…EVIPQVLCTG (124 aa)) form the Bro-N domain.

This is an uncharacterized protein from Lepidoptera (butterflies and moths).